Reading from the N-terminus, the 1066-residue chain is Isoleucine--tRNA ligase (1066 aa).

The 'HIGH' region signature appears at 49-59 (PYVSGAIHLGT). Residues 625–629 (KMSKS) carry the 'KMSKS' region motif. K628 contributes to the ATP binding site.

The protein belongs to the class-I aminoacyl-tRNA synthetase family. IleS type 2 subfamily. Monomer. Requires Zn(2+) as cofactor.

The protein resides in the cytoplasm. The catalysed reaction is tRNA(Ile) + L-isoleucine + ATP = L-isoleucyl-tRNA(Ile) + AMP + diphosphate. In terms of biological role, catalyzes the attachment of isoleucine to tRNA(Ile). As IleRS can inadvertently accommodate and process structurally similar amino acids such as valine, to avoid such errors it has two additional distinct tRNA(Ile)-dependent editing activities. One activity is designated as 'pretransfer' editing and involves the hydrolysis of activated Val-AMP. The other activity is designated 'posttransfer' editing and involves deacylation of mischarged Val-tRNA(Ile). The protein is Isoleucine--tRNA ligase of Pyrococcus furiosus (strain ATCC 43587 / DSM 3638 / JCM 8422 / Vc1).